A 119-amino-acid chain; its full sequence is Large ribosomal subunit protein bL20 (119 aa).

Belongs to the bacterial ribosomal protein bL20 family.

Binds directly to 23S ribosomal RNA and is necessary for the in vitro assembly process of the 50S ribosomal subunit. It is not involved in the protein synthesizing functions of that subunit. In Geobacillus sp. (strain WCH70), this protein is Large ribosomal subunit protein bL20.